The primary structure comprises 188 residues: Ribosome hibernation promotion factor (188 aa).

Positions 93–125 (KTRVNRKKRKESEHEPFPATPETPPETAVDHDK) are disordered.

The protein belongs to the HPF/YfiA ribosome-associated protein family. Long HPF subfamily. As to quaternary structure, interacts with 100S ribosomes.

The protein resides in the cytoplasm. Functionally, required for dimerization of active 70S ribosomes into 100S ribosomes in stationary phase; 100S ribosomes are translationally inactive and sometimes present during exponential growth. The chain is Ribosome hibernation promotion factor from Staphylococcus carnosus (strain TM300).